A 379-amino-acid chain; its full sequence is Cytochrome b (379 aa).

4 helical membrane passes run F33–M53, W77–I98, W113–L133, and F178–L198. Residues H83 and H97 each contribute to the heme b site. Heme b contacts are provided by H182 and H196. H201 provides a ligand contact to a ubiquinone. 4 consecutive transmembrane segments (helical) span residues T226 to F246, M288 to Q308, I320 to G340, and F347 to P367.

The protein belongs to the cytochrome b family. As to quaternary structure, the cytochrome bc1 complex contains 11 subunits: 3 respiratory subunits (MT-CYB, CYC1 and UQCRFS1), 2 core proteins (UQCRC1 and UQCRC2) and 6 low-molecular weight proteins (UQCRH/QCR6, UQCRB/QCR7, UQCRQ/QCR8, UQCR10/QCR9, UQCR11/QCR10 and a cleavage product of UQCRFS1). This cytochrome bc1 complex then forms a dimer. Heme b serves as cofactor.

The protein resides in the mitochondrion inner membrane. Component of the ubiquinol-cytochrome c reductase complex (complex III or cytochrome b-c1 complex) that is part of the mitochondrial respiratory chain. The b-c1 complex mediates electron transfer from ubiquinol to cytochrome c. Contributes to the generation of a proton gradient across the mitochondrial membrane that is then used for ATP synthesis. The polypeptide is Cytochrome b (MT-CYB) (Dipodomys ordii (Ord's kangaroo rat)).